Here is a 1286-residue protein sequence, read N- to C-terminus: Lysine-specific demethylase JMJ705 (1286 aa).

A JmjN domain is found at 25 to 66 (APEFRPTAAEFADPVSYILKIEPAAAPYGICKVVPPLPPPPK). The disordered stretch occupies residues 82–105 (PDDRSPSFPTRHQQVGLCPRRTRP). In terms of domain architecture, JmjC spans 201–367 (ETAWNMRGVA…IAKEAAIRRA (167 aa)). Residues histidine 244, glutamate 246, and histidine 335 each contribute to the Fe cation site. Positions 641–679 (PNSSNNVGCVGTKLSSSSTERQERPSSQNAHCNGSSVIS) are enriched in polar residues. Disordered regions lie at residues 641–686 (PNSS…KGVR), 1013–1060 (AEPV…HSQE), and 1077–1164 (PAGT…PKQA). Residues 1119–1136 (HASGQKSNVQEANANSAS) show a composition bias toward polar residues. The segment at 1167–1189 (YSCDIEGCSMSFRTKRDLSLHKS) adopts a C2H2-type 1; degenerate zinc-finger fold. 3 C2H2-type zinc fingers span residues 1190 to 1214 (DICPVKGCGKKFFSHKYLLQHRKVH), 1220 to 1244 (LTCPWKGCNMAFKWPWARTEHLRVH), and 1250 to 1276 (YVCHEPGCAQTFRFVSDFSRHKRKTGH).

Fe(2+) serves as cofactor. As to expression, expressed in leaves and flag leaves. Expressed at low levels in roots, shoots, stems and panicles.

It localises to the nucleus. The catalysed reaction is N(6),N(6),N(6)-trimethyl-L-lysyl(27)-[histone H3] + 2 2-oxoglutarate + 2 O2 = N(6)-methyl-L-lysyl(27)-[histone H3] + 2 formaldehyde + 2 succinate + 2 CO2. Its function is as follows. Histone demethylase that demethylates 'Lys-27' (H3K27me) of histone H3 with a specific activity for H3K27me3 and H3K27me2. No activity on H3K4me3, H3K9me3, H3K27me1 and H3K36me3. Involved in biotic stress response. May demethylate H3K27me3-marked defense-related genes and increase their basal and induced expression levels during pathogen infection. The chain is Lysine-specific demethylase JMJ705 (JMJ705) from Oryza sativa subsp. japonica (Rice).